Here is a 182-residue protein sequence, read N- to C-terminus: UPF0397 protein SPG_0438 (182 aa).

Helical transmembrane passes span 10-30, 46-66, 73-93, 109-129, and 148-168; these read VVAVGIGAALFVVIGMINIPT, LLSIIFGPIIGLLVGLIGHAI, YGLWWTWIIASGLFGLVVGLF, ILIFNLIQLLANALVWGVLAP, and IVAGIANGVSVAIAGTLLLLA.

The protein belongs to the UPF0397 family.

It localises to the cell membrane. The chain is UPF0397 protein SPG_0438 from Streptococcus pneumoniae serotype 19F (strain G54).